The following is a 264-amino-acid chain: Glutamate racemase 2 (264 aa).

Substrate contacts are provided by residues 10 to 11 (DS) and 42 to 43 (YG). Cysteine 73 acts as the Proton donor/acceptor in catalysis. A substrate-binding site is contributed by 74–75 (NT). Cysteine 181 serves as the catalytic Proton donor/acceptor. Residue 182–183 (TH) coordinates substrate.

The protein belongs to the aspartate/glutamate racemases family.

The enzyme catalyses L-glutamate = D-glutamate. It participates in cell wall biogenesis; peptidoglycan biosynthesis. In terms of biological role, provides the (R)-glutamate required for cell wall biosynthesis. The chain is Glutamate racemase 2 from Caldanaerobacter subterraneus subsp. tengcongensis (strain DSM 15242 / JCM 11007 / NBRC 100824 / MB4) (Thermoanaerobacter tengcongensis).